A 434-amino-acid chain; its full sequence is Enolase (434 aa).

Gln167 is a (2R)-2-phosphoglycerate binding site. Catalysis depends on Glu209, which acts as the Proton donor. Asp246, Glu291, and Asp318 together coordinate Mg(2+). Positions 343, 372, 373, and 394 each coordinate (2R)-2-phosphoglycerate. Lys343 acts as the Proton acceptor in catalysis.

This sequence belongs to the enolase family. In terms of assembly, component of the RNA degradosome, a multiprotein complex involved in RNA processing and mRNA degradation. It depends on Mg(2+) as a cofactor.

It localises to the cytoplasm. Its subcellular location is the secreted. It is found in the cell surface. The enzyme catalyses (2R)-2-phosphoglycerate = phosphoenolpyruvate + H2O. It participates in carbohydrate degradation; glycolysis; pyruvate from D-glyceraldehyde 3-phosphate: step 4/5. Catalyzes the reversible conversion of 2-phosphoglycerate (2-PG) into phosphoenolpyruvate (PEP). It is essential for the degradation of carbohydrates via glycolysis. The sequence is that of Enolase from Buchnera aphidicola subsp. Acyrthosiphon pisum (strain APS) (Acyrthosiphon pisum symbiotic bacterium).